The sequence spans 273 residues: Tyrosinase (273 aa).

Residues His-37, His-53, His-62, His-189, His-193, and His-215 each coordinate Cu cation.

The protein belongs to the tyrosinase family. It depends on Cu(2+) as a cofactor.

It catalyses the reaction 2 L-dopa + O2 = 2 L-dopaquinone + 2 H2O. It carries out the reaction L-tyrosine + O2 = L-dopaquinone + H2O. Its function is as follows. This is a copper-containing oxidase that functions in the formation of pigments such as melanins and other polyphenolic compounds. In Streptomyces lincolnensis, this protein is Tyrosinase (melC2).